The primary structure comprises 360 residues: Biotin synthase 2 (360 aa).

Residues 53 to 280 form the Radical SAM core domain; it reads RRVKLNFLVN…TAEVRLSGGR (228 aa). Positions 68, 72, and 75 each coordinate [4Fe-4S] cluster. Positions 112, 145, 205, and 275 each coordinate [2Fe-2S] cluster.

The protein belongs to the radical SAM superfamily. Biotin synthase family. In terms of assembly, homodimer. Requires [4Fe-4S] cluster as cofactor. [2Fe-2S] cluster is required as a cofactor.

It catalyses the reaction (4R,5S)-dethiobiotin + (sulfur carrier)-SH + 2 reduced [2Fe-2S]-[ferredoxin] + 2 S-adenosyl-L-methionine = (sulfur carrier)-H + biotin + 2 5'-deoxyadenosine + 2 L-methionine + 2 oxidized [2Fe-2S]-[ferredoxin]. It participates in cofactor biosynthesis; biotin biosynthesis; biotin from 7,8-diaminononanoate: step 2/2. Catalyzes the conversion of dethiobiotin (DTB) to biotin by the insertion of a sulfur atom into dethiobiotin via a radical-based mechanism. The sequence is that of Biotin synthase 2 from Frankia casuarinae (strain DSM 45818 / CECT 9043 / HFP020203 / CcI3).